The primary structure comprises 505 residues: Lysine--tRNA ligase (505 aa).

Glu-415 and Glu-422 together coordinate Mg(2+).

It belongs to the class-II aminoacyl-tRNA synthetase family. As to quaternary structure, homodimer. Requires Mg(2+) as cofactor.

The protein resides in the cytoplasm. The enzyme catalyses tRNA(Lys) + L-lysine + ATP = L-lysyl-tRNA(Lys) + AMP + diphosphate. The protein is Lysine--tRNA ligase of Shigella flexneri.